The chain runs to 214 residues: MNKRITVLSLLLATSLSSAAAMADDATELRAKLSNIDSLHATFSQQVTDINSKPIQTGSGVFALAYPNQFYWHLTQPDESLIVADGANLWIYNPFAEEVTVMDVAQAVDASPMALLVHRDEATWAKYSVTKRAVSGKSTCFDIQPKKLNSNVVAVSVCFEASQLVKFNLTDEQGNLSQFALTQQRKVKDNEANIFKFAVPDNVDIDDQRLKQAN.

The first 23 residues, 1–23, serve as a signal peptide directing secretion; that stretch reads MNKRITVLSLLLATSLSSAAAMA.

Belongs to the LolA family. Monomer.

The protein localises to the periplasm. In terms of biological role, participates in the translocation of lipoproteins from the inner membrane to the outer membrane. Only forms a complex with a lipoprotein if the residue after the N-terminal Cys is not an aspartate (The Asp acts as a targeting signal to indicate that the lipoprotein should stay in the inner membrane). The sequence is that of Outer-membrane lipoprotein carrier protein from Shewanella frigidimarina (strain NCIMB 400).